The primary structure comprises 392 residues: CCA-adding enzyme (392 aa).

ATP contacts are provided by Ser45 and Lys48. 2 residues coordinate CTP: Ser45 and Lys48. 3 residues coordinate Mg(2+): Asp55, Asp57, and Glu106. Residues His129, Lys148, and Tyr157 each coordinate ATP. CTP contacts are provided by His129, Lys148, and Tyr157.

Belongs to the tRNA nucleotidyltransferase/poly(A) polymerase family. Archaeal CCA-adding enzyme subfamily. Homodimer. It depends on Mg(2+) as a cofactor.

It catalyses the reaction a tRNA precursor + 2 CTP + ATP = a tRNA with a 3' CCA end + 3 diphosphate. The catalysed reaction is a tRNA with a 3' CCA end + 2 CTP + ATP = a tRNA with a 3' CCACCA end + 3 diphosphate. In terms of biological role, catalyzes the addition and repair of the essential 3'-terminal CCA sequence in tRNAs without using a nucleic acid template. Adds these three nucleotides in the order of C, C, and A to the tRNA nucleotide-73, using CTP and ATP as substrates and producing inorganic pyrophosphate. tRNA 3'-terminal CCA addition is required both for tRNA processing and repair. Also involved in tRNA surveillance by mediating tandem CCA addition to generate a CCACCA at the 3' terminus of unstable tRNAs. While stable tRNAs receive only 3'-terminal CCA, unstable tRNAs are marked with CCACCA and rapidly degraded. In Nanoarchaeum equitans (strain Kin4-M), this protein is CCA-adding enzyme.